The sequence spans 220 residues: Translation initiation factor 6 (220 aa).

Belongs to the eIF-6 family.

Functionally, binds to the 50S ribosomal subunit and prevents its association with the 30S ribosomal subunit to form the 70S initiation complex. The polypeptide is Translation initiation factor 6 (Methanoculleus marisnigri (strain ATCC 35101 / DSM 1498 / JR1)).